Reading from the N-terminus, the 576-residue chain is Small ribosomal subunit protein mS80 (rPPR6) (576 aa).

The N-terminal 76 residues, 1–76, are a transit peptide targeting the mitochondrion; sequence MLRSFLCRSQ…SLPADEIPIS (76 aa). PPR repeat units lie at residues 230–264, 265–299, 300–336, 341–370, 371–405, 406–440, 441–475, 476–510, and 511–546; these read NLEI…GFTP, NAKT…GVLS, EGEQ…SLPP, TLIT…ARRR, GIKP…GPAP, GNAV…GLKP, DVYT…HKKL, SPVT…GVQP, and NADE…GLHL.

This sequence belongs to the PPR family. P subfamily. As to quaternary structure, component of the mitochondrial ribosome small subunit.

It is found in the mitochondrion. The chain is Small ribosomal subunit protein mS80 (rPPR6) from Arabidopsis thaliana (Mouse-ear cress).